Consider the following 322-residue polypeptide: Sideroflexin-1 (322 aa).

Serine 2 carries the N-acetylserine modification. Over 2 to 102 (SGEVPPNINI…MSAQVPMNMT (101 aa)) the chain is Mitochondrial matrix. The helical transmembrane segment at 103–120 (ITGCMMTFYRTTPAVLFW) threads the bilayer. Residues 121 to 146 (QWINQSFNAVVNYTNRSGDAPLTVNE) are Mitochondrial intermembrane-facing. A helical membrane pass occupies residues 147–167 (LGTAYVSATTGAVATALGLNA). Residues 168 to 174 (LTKHVSP) lie on the Mitochondrial matrix side of the membrane. A helical membrane pass occupies residues 175–195 (LIGRFVPFAAVAAANCINIPL). The Mitochondrial intermembrane portion of the chain corresponds to 196–228 (MRQRELKVGIPVTDENGTRLGESTNAAKQAITQ). Residues 229–249 (VVISRILMAAPGMAIPPFIMN) form a helical membrane-spanning segment. Over 250-266 (TLEKKAFLKRFPWMSAP) the chain is Mitochondrial matrix. A helical transmembrane segment spans residues 267 to 287 (IQVTLVGFCLVFATPLCCALF). Over 288-322 (PQKSSMSVTSLEDDLQASIQKSHPELRRVYFNKGL) the chain is Mitochondrial intermembrane.

This sequence belongs to the sideroflexin family.

It localises to the mitochondrion inner membrane. It carries out the reaction L-serine(in) = L-serine(out). The catalysed reaction is L-alanine(in) = L-alanine(out). The enzyme catalyses L-cysteine(in) = L-cysteine(out). Functionally, amino acid transporter importing serine, an essential substrate of the mitochondrial branch of the one-carbon pathway, into mitochondria. Mitochondrial serine is then converted to glycine and formate, which exits to the cytosol where it is used to generate the charged folates that serve as one-carbon donors. May also transport other amino acids including alanine and cysteine. This is Sideroflexin-1 (Sfxn1) from Rattus norvegicus (Rat).